Reading from the N-terminus, the 673-residue chain is Annexin A6 (673 aa).

Position 2 is an N-acetylalanine (A2). S13 bears the Phosphoserine mark. Annexin repeat units lie at residues F20 to R91, P92 to Q163, D175 to K247, S251 to G322, F363 to M434, P435 to T506, E521 to Q595, and N599 to G670. Y30 carries the post-translational modification Phosphotyrosine. N6-acetyllysine occurs at positions 63, 68, 75, and 81. Y201 carries the post-translational modification Phosphotyrosine. K306, K370, and K418 each carry N6-acetyllysine. S422 carries the post-translational modification Phosphoserine. K483 carries the N6-acetyllysine modification. Residue S537 is modified to Phosphoserine. An N6-acetyllysine modification is found at K620.

The protein belongs to the annexin family.

The protein localises to the cytoplasm. It localises to the melanosome. In terms of biological role, may associate with CD21. May regulate the release of Ca(2+) from intracellular stores. This is Annexin A6 (Anxa6) from Rattus norvegicus (Rat).